The primary structure comprises 236 residues: Bacterial rhodopsin CSR3 (236 aa).

The Extracellular segment spans residues 1–3 (MDA). A helical membrane pass occupies residues 4 to 25 (VAVVYGITAAGFAVGVAIVGYL). Residues 26–34 (YASLEGSEE) are Cytoplasmic-facing. The chain crosses the membrane as a helical span at residues 35-56 (RSILAALALIPGFAGISYVAMA). The Extracellular segment spans residues 57-70 (FGIGTVTIGETTLV). The chain crosses the membrane as a helical span at residues 71-92 (GFRYLDWVVTTPLLVGFVGYAA). Topologically, residues 93 to 95 (GAS) are cytoplasmic. Residues 96-118 (RRAIFGVMVADALMILTGVGAVV) form a helical membrane-spanning segment. The Extracellular portion of the chain corresponds to 119–122 (ADGT). The chain crosses the membrane as a helical span at residues 123–150 (LKWVLFGVSTVFHVSLFAYLYLVFPRSV). The Cytoplasmic segment spans residues 151–153 (PDD). The chain crosses the membrane as a helical span at residues 154 to 181 (PQRIGLFSLLKNHIGLLWIAYPLVWLAG). Residues 182–189 (PEGLGLAT) lie on the Extracellular side of the membrane. A helical transmembrane segment spans residues 190-222 (YVGVSITYAFLDLLAKVPYVYFFYARRQVFATK). Lysine 205 is subject to N6-(retinylidene)lysine. Over 223 to 236 (LLRDSGEVTATPAD) the chain is Cytoplasmic.

Belongs to the archaeal/bacterial/fungal opsin family.

The protein resides in the cell membrane. The sequence is that of Bacterial rhodopsin CSR3 from Haloarcula vallismortis (Halobacterium vallismortis).